Reading from the N-terminus, the 276-residue chain is NH(3)-dependent NAD(+) synthetase (276 aa).

43-50 contributes to the ATP binding site; sequence GISGGVDS. D49 is a binding site for Mg(2+). R146 provides a ligand contact to deamido-NAD(+). T166 is an ATP binding site. E171 serves as a coordination point for Mg(2+). Deamido-NAD(+)-binding residues include K179 and D186. Residues K195 and T217 each contribute to the ATP site. A deamido-NAD(+)-binding site is contributed by 266 to 267; that stretch reads HK.

The protein belongs to the NAD synthetase family. Homodimer.

The enzyme catalyses deamido-NAD(+) + NH4(+) + ATP = AMP + diphosphate + NAD(+) + H(+). It functions in the pathway cofactor biosynthesis; NAD(+) biosynthesis; NAD(+) from deamido-NAD(+) (ammonia route): step 1/1. Its function is as follows. Catalyzes the ATP-dependent amidation of deamido-NAD to form NAD. Uses ammonia as a nitrogen source. The chain is NH(3)-dependent NAD(+) synthetase from Shewanella amazonensis (strain ATCC BAA-1098 / SB2B).